The chain runs to 115 residues: NADH-ubiquinone oxidoreductase chain 3 (115 aa).

3 consecutive transmembrane segments (helical) span residues 4–24 (IMVI…AFWL), 55–75 (FFLV…LLPI), and 86–106 (TMML…AYEW).

It belongs to the complex I subunit 3 family. In terms of assembly, core subunit of respiratory chain NADH dehydrogenase (Complex I) which is composed of 45 different subunits. Interacts with TMEM186. Interacts with TMEM242.

Its subcellular location is the mitochondrion inner membrane. It carries out the reaction a ubiquinone + NADH + 5 H(+)(in) = a ubiquinol + NAD(+) + 4 H(+)(out). Its function is as follows. Core subunit of the mitochondrial membrane respiratory chain NADH dehydrogenase (Complex I) which catalyzes electron transfer from NADH through the respiratory chain, using ubiquinone as an electron acceptor. Essential for the catalytic activity of complex I. The chain is NADH-ubiquinone oxidoreductase chain 3 from Baiomys taylori (Northern pygmy mouse).